The sequence spans 131 residues: Snaclec bitiscetin subunit alpha (131 aa).

Disulfide bonds link Cys4-Cys15, Cys32-Cys125, and Cys100-Cys117. The C-type lectin domain maps to 11–126; sequence YKGHCYKVFK…CGEKNPFICK (116 aa).

The protein belongs to the snaclec family. As to quaternary structure, heterodimer of subunits alpha and beta; disulfide-linked. As to expression, expressed by the venom gland.

It localises to the secreted. In terms of biological role, snaclec that binds to von Willebrand factor (VWF) and induces its interaction with GPIbalpha (GP1BA) (via the vWF A1 domain), resulting in platelet aggregation. This is Snaclec bitiscetin subunit alpha from Bitis arietans (African puff adder).